Reading from the N-terminus, the 432-residue chain is Interleukin-11 receptor subunit alpha-1 (432 aa).

Residues 1-23 form the signal peptide; sequence MSSSCSGLTRVLVAVATALVSSS. Over 24–372 the chain is Extracellular; it reads SPCPQAWGPP…DPLEQVAVLA (349 aa). An Ig-like C2-type domain is found at 27–110; sequence PQAWGPPGVQ…SGGMVTLKLG (84 aa). Disulfide bonds link cysteine 48–cysteine 94, cysteine 120–cysteine 130, and cysteine 170–cysteine 180. Fibronectin type-III domains lie at 112–219 and 220–317; these read PPAR…LRPD and PPQG…TPST. A glycan (N-linked (GlcNAc...) asparagine) is linked at asparagine 127. Positions 151–170 are disordered; sequence KTLPGAESQRESPSTGPWPC. A glycan (N-linked (GlcNAc...) asparagine) is linked at asparagine 194. The short motif at 304 to 308 is the WSXWS motif element; that stretch reads WSAWS. Disordered regions lie at residues 309 to 332 and 342 to 361; these read PEAWGTPSTGPLQDEIPDWSQGHG and EDSPAPARPSLQPDPRPLDH. A helical membrane pass occupies residues 373-393; the sequence is SLGIFSCLGLAVGALALGLWL. The Cytoplasmic segment spans residues 394-432; it reads RLRRSGKDGPQKPGLLAPMIPVEKLPGIPNLQRTPENFS.

Belongs to the type I cytokine receptor family. Type 3 subfamily. On IL11 binding, forms a multimer complex with IL6ST/gp130. A short soluble form is also released from the membrane by proteolysis. The sIL11RA is formed either by limited proteolysis of membrane-bound receptors, a process referred to as ectodomain shedding, or directly secreted from the cells after alternative mRNA splicing. mIL11RA is cleaved by the proteases ADAM10, ELANE and PRTN3. Widely expressed in all adult tissues and in embryos. Highest levels in kidney, skeletal muscle and embryo.

Its subcellular location is the membrane. The protein resides in the secreted. In terms of biological role, receptor for interleukin-11. The receptor systems for IL6, LIF, OSM, CNTF, IL11 and CT1 can utilize IL6ST for initiating signal transmission. The IL11/IL11RA/IL6ST complex may be involved in the control of proliferation and/or differentiation of skeletogenic progenitor or other mesenchymal cells. Essential for the normal development of craniofacial bones and teeth. Soluble form of IL11 receptor (sIL11RA) that acts as an agonist of IL11 activity. The IL11:sIL11RA complex binds to IL6ST/gp130 on cell surfaces and induces signaling also on cells that do not express membrane-bound IL11RA in a process called IL11 trans-signaling. The protein is Interleukin-11 receptor subunit alpha-1 of Mus musculus (Mouse).